Reading from the N-terminus, the 177-residue chain is Non-specific lipid transfer protein GPI-anchored 22 (177 aa).

An N-terminal signal peptide occupies residues 1-29; it reads MARFMAYNQNPQMLALCITVAVMFLGVRS. 4 disulfides stabilise this stretch: Cys38–Cys81, Cys48–Cys63, Cys64–Cys108, and Cys79–Cys117. An N-linked (GlcNAc...) asparagine glycan is attached at Asn113. Ser152 carries the GPI-anchor amidated serine lipid modification. The propeptide at 153 to 177 is removed in mature form; sequence SSIKGRDNKQFGLMMAGALSIWYIM.

It belongs to the plant LTP family. Expressed in seedlings, preferentially in hypocotyls and roots. Also observed in siliques.

The protein localises to the cell membrane. In terms of biological role, probable lipid transfer protein. This is Non-specific lipid transfer protein GPI-anchored 22 from Arabidopsis thaliana (Mouse-ear cress).